A 395-amino-acid polypeptide reads, in one-letter code: Dual specificity mitogen-activated protein kinase kinase 1 (395 aa).

A disordered region spans residues methionine 1–proline 24. Residues isoleucine 9–proline 24 show a composition bias toward polar residues. In terms of domain architecture, Protein kinase spans phenylalanine 68 to isoleucine 363. Residues leucine 74–valine 82 and lysine 97 contribute to the ATP site. Aspartate 190 acts as the Proton acceptor in catalysis. Residues serine 218 and serine 222 each carry the phosphoserine; by RAF modification. Positions alanine 284–aspartate 305 are disordered.

It belongs to the protein kinase superfamily. STE Ser/Thr protein kinase family. MAP kinase kinase subfamily. Post-translationally, activated by phosphorylation on Ser/Thr catalyzed by MAP kinase kinase kinases (RAF or MOS). As to expression, expressed in the central nervous system, kidney, liver, intestine and the hematopoietic system.

Its subcellular location is the cytoplasm. It is found in the cytoskeleton. The protein resides in the microtubule organizing center. It localises to the centrosome. The protein localises to the spindle pole body. Its subcellular location is the nucleus. It carries out the reaction L-seryl-[protein] + ATP = O-phospho-L-seryl-[protein] + ADP + H(+). The enzyme catalyses L-threonyl-[protein] + ATP = O-phospho-L-threonyl-[protein] + ADP + H(+). The catalysed reaction is L-tyrosyl-[protein] + ATP = O-phospho-L-tyrosyl-[protein] + ADP + H(+). In terms of biological role, dual specificity protein kinase which acts as an essential component of the MAP kinase signal transduction pathway. Binding of extracellular ligands such as growth factors, cytokines and hormones to their cell-surface receptors activates the MAPK/ERK cascade, ultimately leading to phosphorylation of a threonine and a tyrosine residue in a Thr-Glu-Tyr sequence located in MAP kinases. Depending on the cellular context, this pathway mediates diverse biological functions such as cell growth, adhesion, survival and differentiation predominantly through the regulation of transcription, metabolism and cytoskeletal rearrangements. The chain is Dual specificity mitogen-activated protein kinase kinase 1 (map2k1) from Xenopus laevis (African clawed frog).